A 612-amino-acid polypeptide reads, in one-letter code: Dihydroxy-acid dehydratase (612 aa).

Asp81 serves as a coordination point for Mg(2+). Residue Cys122 coordinates [2Fe-2S] cluster. The Mg(2+) site is built by Asp123 and Lys124. Position 124 is an N6-carboxylysine (Lys124). [2Fe-2S] cluster is bound at residue Cys195. Glu491 contributes to the Mg(2+) binding site. Catalysis depends on Ser517, which acts as the Proton acceptor.

The protein belongs to the IlvD/Edd family. In terms of assembly, homodimer. [2Fe-2S] cluster serves as cofactor. Mg(2+) is required as a cofactor.

It catalyses the reaction (2R)-2,3-dihydroxy-3-methylbutanoate = 3-methyl-2-oxobutanoate + H2O. The catalysed reaction is (2R,3R)-2,3-dihydroxy-3-methylpentanoate = (S)-3-methyl-2-oxopentanoate + H2O. It participates in amino-acid biosynthesis; L-isoleucine biosynthesis; L-isoleucine from 2-oxobutanoate: step 3/4. Its pathway is amino-acid biosynthesis; L-valine biosynthesis; L-valine from pyruvate: step 3/4. Functions in the biosynthesis of branched-chain amino acids. Catalyzes the dehydration of (2R,3R)-2,3-dihydroxy-3-methylpentanoate (2,3-dihydroxy-3-methylvalerate) into 2-oxo-3-methylpentanoate (2-oxo-3-methylvalerate) and of (2R)-2,3-dihydroxy-3-methylbutanoate (2,3-dihydroxyisovalerate) into 2-oxo-3-methylbutanoate (2-oxoisovalerate), the penultimate precursor to L-isoleucine and L-valine, respectively. The polypeptide is Dihydroxy-acid dehydratase (Rhizobium etli (strain ATCC 51251 / DSM 11541 / JCM 21823 / NBRC 15573 / CFN 42)).